The chain runs to 272 residues: 4-hydroxy-tetrahydrodipicolinate reductase (272 aa).

12–17 (GALGKM) contributes to the NAD(+) binding site. NADP(+) is bound at residue Lys39. NAD(+)-binding positions include 102-104 (GTT) and 126-129 (SSNY). The active-site Proton donor/acceptor is the His159. His160 serves as a coordination point for (S)-2,3,4,5-tetrahydrodipicolinate. Lys163 functions as the Proton donor in the catalytic mechanism. 169 to 170 (GT) provides a ligand contact to (S)-2,3,4,5-tetrahydrodipicolinate.

Belongs to the DapB family. As to quaternary structure, homotetramer.

It is found in the cytoplasm. It carries out the reaction (S)-2,3,4,5-tetrahydrodipicolinate + NAD(+) + H2O = (2S,4S)-4-hydroxy-2,3,4,5-tetrahydrodipicolinate + NADH + H(+). The enzyme catalyses (S)-2,3,4,5-tetrahydrodipicolinate + NADP(+) + H2O = (2S,4S)-4-hydroxy-2,3,4,5-tetrahydrodipicolinate + NADPH + H(+). It functions in the pathway amino-acid biosynthesis; L-lysine biosynthesis via DAP pathway; (S)-tetrahydrodipicolinate from L-aspartate: step 4/4. In terms of biological role, catalyzes the conversion of 4-hydroxy-tetrahydrodipicolinate (HTPA) to tetrahydrodipicolinate. This Buchnera aphidicola subsp. Baizongia pistaciae (strain Bp) protein is 4-hydroxy-tetrahydrodipicolinate reductase.